A 547-amino-acid chain; its full sequence is MEDEPTYPSFRQSLLVTISLCLTLFCVSLDETVLATAIPRITDQFQSLNDVGWYGSSYLFVFTATQMAWGKLYTMYPAKWVFLTGVTVFEVGSLVCGVSPTSGALIAGRSIAGLGAGSINAGAVLIISNTIPVQKRPIYLGCLGVVHGVVSVLGPVIGGLLTDHASWRWCFFLNLPIGAITVLGIVFCLSTNQPSAGHLSGKEKLRSMDLLGSAFFIPGILMLLLALEWGGSQYAWDSWRVILLFVLSAVALAVFAVVQVRAPEKATIAPRLVTNRNMLGLIGYIVGNSGGLFVFVYYLPIWLQAIKEFSASKSGLAILPTQLGMVAASLAGGILVTVVRYYTPFLIVSSLLAVAGAGLLSSLHPASGLGSILGYQVVLSVGIGLGAQNAMVVPSVVCAPGDVVMAIATLCFLQMLSSSIALTLAQTVFHSRLVTNLAHRAPSVDSALVEQGATRLRDRVPADLLPSVVGAYSQAVSETFYVGVAMCALSLLGSASMQWKRVPGHKEATEKVEGEGQGQGQQQEQDQGQGWGEVGESHALAHPTADK.

Transmembrane regions (helical) follow at residues 14-34 (LLVTISLCLTLFCVSLDETVL), 50-70 (DVGWYGSSYLFVFTATQMAWG), 80-100 (WVFLTGVTVFEVGSLVCGVSP), 111-131 (IAGLGAGSINAGAVLIISNTI), 138-158 (IYLGCLGVVHGVVSVLGPVIG), 169-189 (WCFFLNLPIGAITVLGIVFCL), 210-230 (LLGSAFFIPGILMLLLALEWG), 238-258 (SWRVILLFVLSAVALAVFAVV), 279-299 (LGLIGYIVGNSGGLFVFVYYL), 316-336 (LAILPTQLGMVAASLAGGILV), 343-363 (TPFLIVSSLLAVAGAGLLSSL), 366-386 (ASGLGSILGYQVVLSVGIGLG), 392-412 (VVPSVVCAPGDVVMAIATLCF), and 475-495 (AVSETFYVGVAMCALSLLGSA). Positions 503-547 (PGHKEATEKVEGEGQGQGQQQEQDQGQGWGEVGESHALAHPTADK) are disordered. Over residues 504 to 514 (GHKEATEKVEG) the composition is skewed to basic and acidic residues.

It belongs to the major facilitator superfamily. TCR/Tet family.

Its subcellular location is the membrane. MFS-type transporter; part of the gene cluster that mediates the biosynthesis of the unguisins, gamma-aminobutyric acid (GABA)-containing fungal cyclic heptapeptides with the amino acid sequence cyclo-(D-Ala1-D-Val2-L-Phe3-D-Val4-D-Ala5-D-Trp6-GABA7) for unguisin A and cyclo-(D-Ala1-D-Val2-L-Leu3-D-Val4-D-Ala5-D-Trp6-GABA7) for unguisin B. May be involved in the secretion of unguisins. The chain is MFS-type transporter ungB from Aspergillus violaceofuscus (strain CBS 115571).